Reading from the N-terminus, the 232-residue chain is Vesicle transport through interaction with t-SNAREs homolog 1B (232 aa).

Ala-2 carries the post-translational modification N-acetylalanine. Interaction with CLINT1 stretches follow at residues 2–23 (AASAASSEHFEKLHEIFRGLLE) and 69–73 (APLTF). Over 2 to 208 (AASAASSEHF…SRKVITNKLL (207 aa)) the chain is Cytoplasmic. Residues 36–98 (AGTEEKKKLV…AKLHREVRST (63 aa)) adopt a coiled-coil conformation. Arg-107 is modified (omega-N-methylarginine). The residue at position 138 (Ser-138) is a Phosphoserine. The stretch at 160-201 (GTEIIEELGEQRDQLERTKSRLVNTNENLSKSRKILRSMSRK) forms a coiled coil. A helical; Anchor for type IV membrane protein membrane pass occupies residues 209–229 (LSVIILLELAILVGLVYYKFF). The Vesicular portion of the chain corresponds to 230–232 (RHH).

The protein belongs to the VTI1 family. As to quaternary structure, forms a SNARE complex with STX7, STX8 and VAMP8 which functions in the homotypic fusion of late endosomes. Component of the SNARE complex composed of STX7, STX8, VAMP7 and VIT1B that is required for heterotypic fusion of late endosomes with lysosomes. May interact with STX17. Interacts with CLINT1. In terms of tissue distribution, broadly expressed.

It localises to the early endosome membrane. Its subcellular location is the late endosome membrane. The protein resides in the lysosome membrane. It is found in the cytoplasmic granule. The protein localises to the recycling endosome membrane. Its function is as follows. V-SNARE that mediates vesicle transport pathways through interactions with t-SNAREs on the target membrane. These interactions are proposed to mediate aspects of the specificity of vesicle trafficking and to promote fusion of the lipid bilayers. This chain is Vesicle transport through interaction with t-SNAREs homolog 1B (Vti1b), found in Mus musculus (Mouse).